A 340-amino-acid chain; its full sequence is Methionyl-tRNA formyltransferase (340 aa).

Position 110-113 (110-113 (SLLP)) interacts with (6S)-5,6,7,8-tetrahydrofolate.

This sequence belongs to the Fmt family.

It carries out the reaction L-methionyl-tRNA(fMet) + (6R)-10-formyltetrahydrofolate = N-formyl-L-methionyl-tRNA(fMet) + (6S)-5,6,7,8-tetrahydrofolate + H(+). Functionally, attaches a formyl group to the free amino group of methionyl-tRNA(fMet). The formyl group appears to play a dual role in the initiator identity of N-formylmethionyl-tRNA by promoting its recognition by IF2 and preventing the misappropriation of this tRNA by the elongation apparatus. The polypeptide is Methionyl-tRNA formyltransferase (Synechococcus sp. (strain WH7803)).